We begin with the raw amino-acid sequence, 583 residues long: Aspartate--tRNA ligase (583 aa).

Glutamate 174 is a binding site for L-aspartate. An aspartate region spans residues 198–201 (QITK). Arginine 220 contributes to the L-aspartate binding site. ATP is bound by residues 220–222 (RDE) and glutamine 229. Histidine 443 contributes to the L-aspartate binding site. ATP is bound at residue glutamate 477. Arginine 484 contributes to the L-aspartate binding site. Position 529 to 532 (529 to 532 (GLDR)) interacts with ATP.

This sequence belongs to the class-II aminoacyl-tRNA synthetase family. Type 1 subfamily. Homodimer.

The protein resides in the cytoplasm. It carries out the reaction tRNA(Asp) + L-aspartate + ATP = L-aspartyl-tRNA(Asp) + AMP + diphosphate. Its function is as follows. Catalyzes the attachment of L-aspartate to tRNA(Asp) in a two-step reaction: L-aspartate is first activated by ATP to form Asp-AMP and then transferred to the acceptor end of tRNA(Asp). This Streptococcus thermophilus (strain CNRZ 1066) protein is Aspartate--tRNA ligase.